A 379-amino-acid chain; its full sequence is Queuine tRNA-ribosyltransferase (379 aa).

Asp-94 (proton acceptor) is an active-site residue. Substrate-binding positions include 94–98, Asp-148, Gln-191, and Gly-218; that span reads DSGGF. Residues 249 to 255 are RNA binding; it reads GVGSPDS. Asp-268 serves as the catalytic Nucleophile. The RNA binding; important for wobble base 34 recognition stretch occupies residues 273 to 277; it reads TRIAR. The Zn(2+) site is built by Cys-306, Cys-308, Cys-311, and His-337.

It belongs to the queuine tRNA-ribosyltransferase family. As to quaternary structure, homodimer. Within each dimer, one monomer is responsible for RNA recognition and catalysis, while the other monomer binds to the replacement base PreQ1. The cofactor is Zn(2+).

The enzyme catalyses 7-aminomethyl-7-carbaguanine + guanosine(34) in tRNA = 7-aminomethyl-7-carbaguanosine(34) in tRNA + guanine. It functions in the pathway tRNA modification; tRNA-queuosine biosynthesis. Catalyzes the base-exchange of a guanine (G) residue with the queuine precursor 7-aminomethyl-7-deazaguanine (PreQ1) at position 34 (anticodon wobble position) in tRNAs with GU(N) anticodons (tRNA-Asp, -Asn, -His and -Tyr). Catalysis occurs through a double-displacement mechanism. The nucleophile active site attacks the C1' of nucleotide 34 to detach the guanine base from the RNA, forming a covalent enzyme-RNA intermediate. The proton acceptor active site deprotonates the incoming PreQ1, allowing a nucleophilic attack on the C1' of the ribose to form the product. After dissociation, two additional enzymatic reactions on the tRNA convert PreQ1 to queuine (Q), resulting in the hypermodified nucleoside queuosine (7-(((4,5-cis-dihydroxy-2-cyclopenten-1-yl)amino)methyl)-7-deazaguanosine). In Bacillus cereus (strain G9842), this protein is Queuine tRNA-ribosyltransferase.